We begin with the raw amino-acid sequence, 628 residues long: Serine/threonine-protein kinase Nek11 (628 aa).

In terms of domain architecture, Protein kinase spans 30-288 (YVLQQKLGSG…AADILKAPYM (259 aa)). ATP contacts are provided by residues 36–44 (LGSGSFGTV) and lysine 62. Aspartate 159 acts as the Proton acceptor in catalysis. At serine 274 the chain carries Phosphoserine; by CHEK1. The stretch at 347 to 385 (WLRKLQAADERARRLKKIAEENYKENDKRMQALRSRNVG) forms a coiled coil. The span at 452 to 463 (SEDSEEQEEEMI) shows a compositional bias: acidic residues. The segment at 452–475 (SEDSEEQEEEMIFSEAGGDTKEEE) is disordered.

It belongs to the protein kinase superfamily. NEK Ser/Thr protein kinase family. NIMA subfamily. In terms of assembly, interacts with NEK2. It depends on Mn(2+) as a cofactor. Mg(2+) is required as a cofactor. In terms of processing, phosphorylated by NEK2. Phosphorylation at Ser-274 is important for its activation.

It is found in the nucleus. Its subcellular location is the nucleolus. It catalyses the reaction L-seryl-[protein] + ATP = O-phospho-L-seryl-[protein] + ADP + H(+). It carries out the reaction L-threonyl-[protein] + ATP = O-phospho-L-threonyl-[protein] + ADP + H(+). With respect to regulation, autorepressed by intramolecular binding of the C-terminus which dissociates following phosphorylation by NEK2. Activated in response to DNA damage. Inhibited by zinc. Its function is as follows. Protein kinase which plays an important role in the G2/M checkpoint response to DNA damage. Controls degradation of CDC25A by directly phosphorylating it on residues whose phosphorylation is required for BTRC-mediated polyubiquitination and degradation. The protein is Serine/threonine-protein kinase Nek11 of Mus musculus (Mouse).